We begin with the raw amino-acid sequence, 397 residues long: Carnitine transport ATP-binding protein OpuCA (397 aa).

One can recognise an ABC transporter domain in the interval 2 to 236; sequence LKFEHVTKTY…PANSFVEDFI (235 aa). 35–42 serves as a coordination point for ATP; the sequence is GPSGCGKT. CBS domains follow at residues 255–311 and 315–373; these read MNTN…ATSV and IEKN…WGTL. Residues 377 to 397 form a disordered region; the sequence is TENQEEQADSKTTEPEMKQEG. Over residues 384 to 397 the composition is skewed to basic and acidic residues; sequence ADSKTTEPEMKQEG.

The protein belongs to the ABC transporter superfamily. In terms of assembly, the complex is composed of two ATP-binding proteins (OpuCA), two transmembrane proteins (OpuCB and OpuCD) and a solute-binding protein (OpuCC).

The catalysed reaction is a quaternary ammonium(out) + ATP + H2O = a quaternary ammonium(in) + ADP + phosphate + H(+). In terms of biological role, part of the ABC transporter complex OpuCABCD involved in carnitine uptake. Probably responsible for energy coupling to the transport system. Involved, with BetL and GbuABC, in osmoprotection and cryoprotection of Listeria. Can also mediate weak glycine betaine transport. This chain is Carnitine transport ATP-binding protein OpuCA (opuCA), found in Listeria monocytogenes serotype 1/2a (strain 10403S).